Here is a 202-residue protein sequence, read N- to C-terminus: UPF0301 protein Meso_0753 (202 aa).

The protein belongs to the UPF0301 (AlgH) family.

This chain is UPF0301 protein Meso_0753, found in Chelativorans sp. (strain BNC1).